The following is a 95-amino-acid chain: Small ribosomal subunit protein uS15 (95 aa).

This sequence belongs to the universal ribosomal protein uS15 family. Part of the 30S ribosomal subunit. Forms a bridge to the 50S subunit in the 70S ribosome, contacting the 23S rRNA.

In terms of biological role, one of the primary rRNA binding proteins, it binds directly to 16S rRNA where it helps nucleate assembly of the platform of the 30S subunit by binding and bridging several RNA helices of the 16S rRNA. Its function is as follows. Forms an intersubunit bridge (bridge B4) with the 23S rRNA of the 50S subunit in the ribosome. The chain is Small ribosomal subunit protein uS15 from Sulfurihydrogenibium sp. (strain YO3AOP1).